The chain runs to 512 residues: Endoglucanase 14 (512 aa).

An N-terminal signal peptide occupies residues 1–22; it reads MLAAAIELVVIATSCMVRDAHG. A glycan (N-linked (GlcNAc...) asparagine) is linked at Asn-76. Catalysis depends on Asp-103, which acts as the Nucleophile. N-linked (GlcNAc...) asparagine glycosylation is found at Asn-192 and Asn-215. Active-site residues include His-433, Asp-484, and Glu-493.

It belongs to the glycosyl hydrolase 9 (cellulase E) family.

Its subcellular location is the secreted. The enzyme catalyses Endohydrolysis of (1-&gt;4)-beta-D-glucosidic linkages in cellulose, lichenin and cereal beta-D-glucans.. This chain is Endoglucanase 14, found in Oryza sativa subsp. japonica (Rice).